The primary structure comprises 199 residues: Peroxisomal membrane protein PEX17 (199 aa).

It localises to the peroxisome membrane. Its function is as follows. Component of the peroxisomal translocation machinery with PEX13 and PEX14. Interacts indirectly with the PTS1 receptor (PAS10/PEX5) and directly binds to PEX14. Required for import of both PTS1 and PTS2 proteins. The sequence is that of Peroxisomal membrane protein PEX17 (PEX17) from Saccharomyces cerevisiae (strain ATCC 204508 / S288c) (Baker's yeast).